Reading from the N-terminus, the 600-residue chain is MEFKLIAEYFDKLEKISSRLQLTALLTDLFKKADKNVIDKVVYLIQGKLWPDFLGYPELGVGEKLLIKAISIAVNVKEEVVEEQLKVVGDLGEVAMRLKKTPQSASILSFLGAQSNEGLTVEETYESLTKIALASGEGSRDIKIRSLAGLLKKASPLEAKYIVRFVDGRLRVGIGDATIMDALSTAFTGSTSFRPLIERAYNLRADLGNIAKIIAQQGVEALKDIKPQVGIPIRPMLAERMSDPAEILAKVGGEALVDYKYDGERAQIHKKDKEVYIFSRRLENITRMYPDVVEYVREYINANEVIIEGEIVAVDPESNEIRPFQELMHRKRKNDINEAIKEYPVNVYLFDLMLYEDADYTMKPLPERRKKLEEVIKPNDKLHIAHHIYTNNVDKLMEFFYDAISNGAEGVMVKSVAKDSIYQAGSRGFLWIKLKRDYQSEMADSVDLVVVGAFYGRGKRGGKLSSLLMAAYDPETDTFKTVCKVASGFSDAELDELQKKLMEIKLDKKDPRVDSQLEPDIWVEPKYVAEIIGAEITLSPEHTCCKDMVSKGAGLSVRFPRFIRWRDDKSIEDATTPKEIYEMYKMKLRKKEEEQHTDEA.

Residue Asp258 coordinates ATP. The active-site N6-AMP-lysine intermediate is Lys260. Residues Arg265, Arg280, Glu310, Phe350, Arg427, and Lys433 each coordinate ATP.

It belongs to the ATP-dependent DNA ligase family. The cofactor is Mg(2+).

The enzyme catalyses ATP + (deoxyribonucleotide)n-3'-hydroxyl + 5'-phospho-(deoxyribonucleotide)m = (deoxyribonucleotide)n+m + AMP + diphosphate.. With respect to regulation, inhibited by PCNA123 and PCNA323. In terms of biological role, DNA ligase that seals nicks in double-stranded DNA during DNA replication, DNA recombination and DNA repair. The sequence is that of DNA ligase from Sulfurisphaera tokodaii (strain DSM 16993 / JCM 10545 / NBRC 100140 / 7) (Sulfolobus tokodaii).